We begin with the raw amino-acid sequence, 367 residues long: Serine/threonine-protein kinase Sgk2 (367 aa).

A disordered region spans residues 1–28 (MASSPVGVPSPQPSRANGNINLGPSANP). Ser10 is subject to Phosphoserine. Residues 15 to 28 (RANGNINLGPSANP) show a composition bias toward polar residues. A Protein kinase domain is found at 35 to 292 (FDFLKVIGKG…FLDIKNHMFF (258 aa)). ATP-binding positions include 41–49 (IGKGNYGKV) and Lys64. Residues 68-78 (KKSILKNKEQN) carry the Nuclear localization signal motif. Catalysis depends on Asp159, which acts as the Proton acceptor. Thr193 is subject to Phosphothreonine; by PDPK1. The 75-residue stretch at 293-367 (SPINWDDLYH…AQDDDDILDS (75 aa)) folds into the AGC-kinase C-terminal domain. 2 positions are modified to phosphoserine: Ser334 and Ser356. The residue at position 357 (Tyr357) is a Phosphotyrosine.

Belongs to the protein kinase superfamily. AGC Ser/Thr protein kinase family. Activated by phosphorylation on Ser-356 by an unknown kinase (may be mTORC2 but not confirmed), transforming it into a substrate for PDPK1 which then phosphorylates it on Thr-193.

The protein resides in the cytoplasm. The protein localises to the nucleus. The enzyme catalyses L-seryl-[protein] + ATP = O-phospho-L-seryl-[protein] + ADP + H(+). The catalysed reaction is L-threonyl-[protein] + ATP = O-phospho-L-threonyl-[protein] + ADP + H(+). Its activity is regulated as follows. Two specific sites, one in the kinase domain (Thr-193) and the other in the C-terminal regulatory region (Ser-356), need to be phosphorylated for its full activation. In terms of biological role, serine/threonine-protein kinase which is involved in the regulation of a wide variety of ion channels, membrane transporters, cell growth, survival and proliferation. Up-regulates Na(+) channels: SCNN1A/ENAC, K(+) channels: KCNA3/Kv1.3, KCNE1 and KCNQ1, amino acid transporter: SLC6A19, glutamate transporter: SLC1A6/EAAT4, glutamate receptors: GRIA1/GLUR1 and GRIK2/GLUR6, Na(+)/H(+) exchanger: SLC9A3/NHE3, and the Na(+)/K(+) ATPase. In Mus musculus (Mouse), this protein is Serine/threonine-protein kinase Sgk2 (Sgk2).